We begin with the raw amino-acid sequence, 1242 residues long: Myosin-16 (1242 aa).

Residues 6-55 (MVDSHVWVEDPERAWIDGVVLNIKGEEAEIKTNDGRDVIANLSRLYPKDT) form the Myosin N-terminal SH3-like domain. Residues 60–729 (EGVEDMTRLS…QMAELDAHRT (670 aa)) form the Myosin motor domain. ATP-binding positions include 154-161 (GESGSGKT) and 207-215 (NNNSSRFGK). Actin-binding regions lie at residues 493–527 (LIEK…YHTF), 529–552 (DHKR…AGDV), 587–610 (FPPL…KLQL), and 610–632 (LQQL…KPNN). 6 consecutive IQ domains span residues 732–761 (LGES…ASVN), 755–784 (MRRA…EEAA), 780–809 (REEA…SALT), 803–832 (TKSS…TRAA), 828–857 (TTRA…VSLL), and 851–880 (LKRV…ADRK). Disordered regions lie at residues 869-893 (KQLG…ELSN) and 908-1042 (EQSD…ERKT). Residues 876–893 (QADRKEETEKERKVELSN) show a composition bias toward basic and acidic residues. 6 consecutive repeat copies span residues 876 to 908 (QADR…LHSE), 909 to 940 (QSDD…LHSE), 941 to 965 (QSDD…GHSD), 966 to 997 (QSDD…MHSD), 998 to 1029 (QSDD…VHSD), and 1030 to 1061 (QSDD…TCSE). The interval 876–1061 (QADRKEETEK…IQKSFVTCSE (186 aa)) is 6 X 33 AA repeats of Q-S-D-D-x-E-E-x(2)-H-x-R-K-x-K-x(2)-I-x(2)-E-D-G-x(3)-S-x-V-x-H-S-x. The segment covering 948 to 966 (GHERKTKLSIESEDGHSDQ) has biased composition (basic and acidic residues). Residues 1079 to 1142 (DTEIESLTAE…QLQDSLNRLL (64 aa)) adopt a coiled-coil conformation. Positions 1175–1242 (DLADSSENSE…DKEGGFEDYF (68 aa)) are disordered. Positions 1179–1191 (SSENSEASSSDSD) are enriched in low complexity. A compositionally biased stretch (polar residues) spans 1199-1224 (PSSDNFSTFNPNQLQVIVQDLSTTEA). Residues 1225 to 1242 (KGTESYDSDKEGGFEDYF) show a composition bias toward basic and acidic residues.

The protein belongs to the TRAFAC class myosin-kinesin ATPase superfamily. Myosin family. Plant myosin class XI subfamily. Homodimer. In terms of tissue distribution, expressed in flowers and leaves.

Its subcellular location is the cytoplasm. In terms of biological role, myosin heavy chain that is required for the cell cycle-regulated transport of various organelles and proteins for their segregation. Functions by binding with its tail domain to receptor proteins on organelles and exerting force with its N-terminal motor domain against actin filaments, thereby transporting its cargo along polarized actin cables. The chain is Myosin-16 (XI-J) from Arabidopsis thaliana (Mouse-ear cress).